A 240-amino-acid chain; its full sequence is Ditrans,polycis-undecaprenyl-diphosphate synthase ((2E,6E)-farnesyl-diphosphate specific) (240 aa).

Residue Asp-18 is part of the active site. Position 18 (Asp-18) interacts with Mg(2+). Substrate is bound by residues 19 to 22 (GNGR), Trp-23, Arg-31, His-35, and 63 to 65 (SSE). Asn-66 (proton acceptor) is an active-site residue. Substrate is bound by residues Trp-67, Arg-69, Arg-186, and 192–194 (RIS). Mg(2+) is bound at residue Glu-205.

This sequence belongs to the UPP synthase family. Homodimer. Mg(2+) is required as a cofactor.

It carries out the reaction 8 isopentenyl diphosphate + (2E,6E)-farnesyl diphosphate = di-trans,octa-cis-undecaprenyl diphosphate + 8 diphosphate. Its function is as follows. Catalyzes the sequential condensation of isopentenyl diphosphate (IPP) with (2E,6E)-farnesyl diphosphate (E,E-FPP) to yield (2Z,6Z,10Z,14Z,18Z,22Z,26Z,30Z,34E,38E)-undecaprenyl diphosphate (di-trans,octa-cis-UPP). UPP is the precursor of glycosyl carrier lipid in the biosynthesis of bacterial cell wall polysaccharide components such as peptidoglycan and lipopolysaccharide. In Pasteurella multocida (strain Pm70), this protein is Ditrans,polycis-undecaprenyl-diphosphate synthase ((2E,6E)-farnesyl-diphosphate specific).